An 806-amino-acid chain; its full sequence is Leucine--tRNA ligase (806 aa).

Positions 40–51 (PYPSGKGLHVGH) match the 'HIGH' region motif. The short motif at 580–584 (KMSKS) is the 'KMSKS' region element. Lys583 is an ATP binding site.

Belongs to the class-I aminoacyl-tRNA synthetase family.

The protein localises to the cytoplasm. The catalysed reaction is tRNA(Leu) + L-leucine + ATP = L-leucyl-tRNA(Leu) + AMP + diphosphate. The chain is Leucine--tRNA ligase from Ureaplasma urealyticum serovar 10 (strain ATCC 33699 / Western).